A 1081-amino-acid chain; its full sequence is FHF complex subunit HOOK-interacting protein 1A (1081 aa).

Disordered stretches follow at residues 474-496 (SEEQLLPETPCSPSSPSPPPPPA), 544-623 (PETF…DPPK), 658-770 (EKDT…ENEP), and 863-883 (EAGSSPFGVGEDTAFSSRHPV). The segment covering 486-496 (PSSPSPPPPPA) has biased composition (pro residues). The span at 553 to 564 (EESRENSGHPEA) shows a compositional bias: basic and acidic residues. The span at 567 to 576 (PQQSVRTSGQ) shows a compositional bias: polar residues. Residues 680–707 (EPLEDTSEQQEDTSEQLEDTSELQEDTA) show a composition bias toward acidic residues. Composition is skewed to polar residues over residues 727–738 (EAQSLPTSNGPL) and 746–762 (ESQPSRESSDLCQNTFS).

Belongs to the FHIP family. As to quaternary structure, may be a component of the FTS/Hook/FHIP complex (FHF complex), composed of AKTIP/FTS, FHIP1B, and one or more members of the Hook family of proteins HOOK1, HOOK2, and HOOK3. May interact directly with AKTIP/FTS.

Its function is as follows. Probable component of the FTS/Hook/FHIP complex (FHF complex). FHF complex promotes the distribution of AP-4 complex to the perinuclear area of the cell. In Mus musculus (Mouse), this protein is FHF complex subunit HOOK-interacting protein 1A.